A 412-amino-acid polypeptide reads, in one-letter code: DNA primase DnaG (412 aa).

The Toprim domain occupies 165-243; that stretch reads PELIIVEGRA…KLDYVARAPT (79 aa). Mg(2+) is bound by residues Glu171, Asp216, and Asp218.

This sequence belongs to the archaeal DnaG primase family. Forms a ternary complex with MCM helicase and DNA. Component of the archaeal exosome complex. Mg(2+) is required as a cofactor.

The enzyme catalyses ssDNA + n NTP = ssDNA/pppN(pN)n-1 hybrid + (n-1) diphosphate.. RNA polymerase that catalyzes the synthesis of short RNA molecules used as primers for DNA polymerase during DNA replication. Also part of the exosome, which is a complex involved in RNA degradation. Acts as a poly(A)-binding protein that enhances the interaction between heteromeric, adenine-rich transcripts and the exosome. The sequence is that of DNA primase DnaG from Sulfolobus acidocaldarius (strain ATCC 33909 / DSM 639 / JCM 8929 / NBRC 15157 / NCIMB 11770).